Consider the following 598-residue polypeptide: Arylsulfate sulfotransferase AssT (598 aa).

The signal sequence occupies residues 1–27 (MFDKYRKTLVAGTVAITLGLSASGVMA). H279 and H383 together coordinate 4-methylumbelliferone. A disulfide bridge connects residues C445 and C451. H463 contacts 4-methylumbelliferone. H463 serves as the catalytic Nucleophile; sulfurylated histidine covalent intermediate.

It belongs to the aryl sulfotransferase family. Homodimer. In terms of processing, the disulfide bond is crucial for enzyme activity.

The protein resides in the periplasm. It catalyses the reaction an aryl sulfate + a phenol = an aryl sulfate + a phenol. The enzyme catalyses 4-methylumbelliferone sulfate + phenol = phenyl sulfate + 4-methylumbelliferone. Functionally, catalyzes the transfer of a sulfate group from a phenyl sulfate ester to other phenolic compounds. In vitro, is able to use 4-methylumbelliferyl sulfate and p-nitrophenyl sulfate (PNS) as donor substrates with phenol as the acceptor substrate. Cannot use 3'-phosphoadenosine-5'-phophosulfate (PAPS), the donor substrate of mammalian sulfotransferase. This Escherichia coli O6:H1 (strain CFT073 / ATCC 700928 / UPEC) protein is Arylsulfate sulfotransferase AssT.